We begin with the raw amino-acid sequence, 226 residues long: Flagellar L-ring protein (226 aa).

Residues 1-15 (MRILGLSAALLILGG) form the signal peptide. A lipid anchor (N-palmitoyl cysteine) is attached at cysteine 16. The S-diacylglycerol cysteine moiety is linked to residue cysteine 16.

This sequence belongs to the FlgH family. As to quaternary structure, the basal body constitutes a major portion of the flagellar organelle and consists of four rings (L,P,S, and M) mounted on a central rod.

Its subcellular location is the cell outer membrane. It is found in the bacterial flagellum basal body. In terms of biological role, assembles around the rod to form the L-ring and probably protects the motor/basal body from shearing forces during rotation. The chain is Flagellar L-ring protein from Alteromonas mediterranea (strain DSM 17117 / CIP 110805 / LMG 28347 / Deep ecotype).